Consider the following 378-residue polypeptide: Homeobox protein Meis3 (378 aa).

The segment at 24–57 (FSEAAPSVPRAPGPYTPHRPPQLQAPGLDSDSLK) is disordered. Pro residues predominate over residues 32 to 43 (PRAPGPYTPHRP). Positions 99–182 (GGDVCSSDSF…PIDLVIEDRD (84 aa)) constitute an MEIS N-terminal domain. The segment at 203–265 (NTTWIRDHED…DEDLDLERRR (63 aa)) is disordered. Residues 230–244 (SQSGDNSSDQGDGLD) show a composition bias toward low complexity. The homeobox; TALE-type DNA-binding region spans 265–327 (RNKKRGIFPK…NARRRIVQPM (63 aa)).

The protein belongs to the TALE/MEIS homeobox family. As to expression, expressed at high levels in the brain. Significant expression also observed in the heart, spleen and lung. Expressed in pancreatic islets (beta-cells and non-beta-cells).

The protein localises to the nucleus. In terms of biological role, transcriptional regulator which directly modulates PDPK1 expression, thus promoting survival of pancreatic beta-cells. Also regulates expression of NDFIP1, BNIP3, and CCNG1. The sequence is that of Homeobox protein Meis3 (Meis3) from Mus musculus (Mouse).